The following is an 892-amino-acid chain: E3 ubiquitin ligase PQT3-like (892 aa).

Residues 3–76 (IYYKFKSARD…NTSVLIRRVP (74 aa)) form the DWNN domain. The CCHC-type zinc-finger motif lies at 210–224 (CHRCNIPGHFIQHCP). Residue serine 285 is modified to Phosphoserine. The segment at 295–333 (CPLCKEVMKDAALTSKCCYKSFCDKCIRDHIISKSMCVC) adopts an RING-type; degenerate zinc-finger fold. Disordered regions lie at residues 375 to 408 (DLES…NNND), 459 to 493 (TQAP…MQWN), and 623 to 892 (MLRK…RSRA). Position 404 is a phosphoserine (serine 404). Positions 623 to 644 (MLRKRENERRPEGGKMFRDGEN) are enriched in basic and acidic residues. Polar residues predominate over residues 647–666 (MMMNNGTSASASSINPNKSR). Positions 674-692 (HDYDRRRRPEKRLSPEHPP) are enriched in basic and acidic residues. Residues 693–700 (TRKNISPS) carry the Nuclear localization signal motif. Basic and acidic residues predominate over residues 708–745 (ERYPDERDRQRDRERSRHQDVDREHDRTRDRRDEDRSR). A compositionally biased stretch (low complexity) spans 810 to 832 (SSSSTSVTDPSASASAAAAVGTS). Serine 866 carries the phosphoserine modification. A compositionally biased stretch (basic and acidic residues) spans 875–892 (SEDKLRYSKRGKGERSRA).

Its subcellular location is the nucleus. It catalyses the reaction S-ubiquitinyl-[E2 ubiquitin-conjugating enzyme]-L-cysteine + [acceptor protein]-L-lysine = [E2 ubiquitin-conjugating enzyme]-L-cysteine + N(6)-ubiquitinyl-[acceptor protein]-L-lysine.. This Arabidopsis thaliana (Mouse-ear cress) protein is E3 ubiquitin ligase PQT3-like.